The chain runs to 380 residues: Chaperone protein DnaJ (380 aa).

The J domain occupies 5-70 (DYYEVLGVER…SKRAAYDQYG (66 aa)). Residues 139–217 (GTNVNIRVPT…CHGEGRVEES (79 aa)) form a CR-type zinc finger. Zn(2+)-binding residues include Cys152, Cys155, Cys169, Cys172, Cys191, Cys194, Cys205, and Cys208. CXXCXGXG motif repeat units lie at residues 152-159 (CKPCDGSG), 169-176 (CPTCGGIG), 191-198 (CPRCHGHG), and 205-212 (CDSCHGEG). The interval 224-245 (VPPGVDTGDRIRLSGEGEAGTQ) is disordered.

Belongs to the DnaJ family. In terms of assembly, homodimer. Requires Zn(2+) as cofactor.

It is found in the cytoplasm. Participates actively in the response to hyperosmotic and heat shock by preventing the aggregation of stress-denatured proteins and by disaggregating proteins, also in an autonomous, DnaK-independent fashion. Unfolded proteins bind initially to DnaJ; upon interaction with the DnaJ-bound protein, DnaK hydrolyzes its bound ATP, resulting in the formation of a stable complex. GrpE releases ADP from DnaK; ATP binding to DnaK triggers the release of the substrate protein, thus completing the reaction cycle. Several rounds of ATP-dependent interactions between DnaJ, DnaK and GrpE are required for fully efficient folding. Also involved, together with DnaK and GrpE, in the DNA replication of plasmids through activation of initiation proteins. This is Chaperone protein DnaJ from Pseudomonas syringae pv. syringae (strain B728a).